Here is a 123-residue protein sequence, read N- to C-terminus: Glycine cleavage system H protein (123 aa).

The region spanning 23–104 (HWLAGITDHA…PYDAWIFSFE (82 aa)) is the Lipoyl-binding domain. K64 is modified (N6-lipoyllysine).

This sequence belongs to the GcvH family. The glycine cleavage system is composed of four proteins: P, T, L and H. (R)-lipoate is required as a cofactor.

The glycine cleavage system catalyzes the degradation of glycine. The H protein shuttles the methylamine group of glycine from the P protein to the T protein. This is Glycine cleavage system H protein from Methylobacillus flagellatus (strain ATCC 51484 / DSM 6875 / VKM B-1610 / KT).